The sequence spans 487 residues: Cyclic AMP-dependent transcription factor ATF-2 (487 aa).

Residues 7 to 31 form a C2H2-type zinc finger; that stretch reads FLCTAPGCGQRFTNEDHLAVHKHKH. Disordered regions lie at residues 106 to 132 and 267 to 354; these read EEPS…DEKE and QHPQ…CRQK. Residues 298–319 are compositionally biased toward low complexity; the sequence is QQPATSTTETPASPAQPTQQTP. The segment covering 328–345 has biased composition (basic and acidic residues); it reads AANEDPDEKRRKFLERNR. Residues 334 to 397 form the bZIP domain; it reads DEKRRKFLER…AQLKQLLLAH (64 aa). Positions 336–356 are basic motif; it reads KRRKFLERNRAAASRCRQKRK. Positions 362–390 are leucine-zipper; the sequence is LEKKAEDLSSLNGQLQNEVTLLRNEVAQL. The Nuclear export signal signature appears at 387–396; it reads VAQLKQLLLA. A disordered region spans residues 407 to 487; that stretch reads KKSGYHTADK…PPSQAQPSGS (81 aa). A compositionally biased stretch (polar residues) spans 425 to 436; that stretch reads VPSSPHTEAIQH. The segment covering 437-449 has biased composition (low complexity); the sequence is SSVSTSNGVSSTS. Over residues 457–468 the composition is skewed to polar residues; that stretch reads SVLTQLADQSSE.

This sequence belongs to the bZIP family. ATF subfamily. In terms of assembly, binds DNA as a dimer and can form a homodimer in the absence of DNA. Can form a heterodimer with JUN. Heterodimerization is essential for its transcriptional activity.

The protein localises to the nucleus. Its subcellular location is the cytoplasm. The protein resides in the mitochondrion outer membrane. Transcriptional activator which regulates the transcription of various genes, including those involved in anti-apoptosis, cell growth, and DNA damage response. Dependent on its binding partner, binds to CRE (cAMP response element) consensus sequences (5'-TGACGTCA-3') or to AP-1 (activator protein 1) consensus sequences (5'-TGACTCA-3'). This chain is Cyclic AMP-dependent transcription factor ATF-2 (ATF2), found in Gallus gallus (Chicken).